The primary structure comprises 286 residues: 4-hydroxybenzoate octaprenyltransferase (286 aa).

7 consecutive transmembrane segments (helical) span residues 20-40, 43-63, 95-115, 142-162, 167-187, 210-230, and 234-254; these read IGTLLLLWPCLMALLLAAGGM, LKVLTIFIFGVVVMRACGCII, ILFAVMGLFAFGLVLMLNPLV, FLGVVWSWSIPMAYAAQTGEV, WWLFAANWCWTVAYDTMYAMV, QIIGLFQLAALACFITAGWAA, and LVYGLGIITFVGFSMYQQKLI.

The protein belongs to the UbiA prenyltransferase family. Mg(2+) serves as cofactor.

It localises to the cell inner membrane. The enzyme catalyses all-trans-octaprenyl diphosphate + 4-hydroxybenzoate = 4-hydroxy-3-(all-trans-octaprenyl)benzoate + diphosphate. Its pathway is cofactor biosynthesis; ubiquinone biosynthesis. Catalyzes the prenylation of para-hydroxybenzoate (PHB) with an all-trans polyprenyl group. Mediates the second step in the final reaction sequence of ubiquinone-8 (UQ-8) biosynthesis, which is the condensation of the polyisoprenoid side chain with PHB, generating the first membrane-bound Q intermediate 3-octaprenyl-4-hydroxybenzoate. This is 4-hydroxybenzoate octaprenyltransferase from Shewanella sediminis (strain HAW-EB3).